The chain runs to 323 residues: Syntaxin-42 (323 aa).

Residues 1 to 302 (MATRNRTTVY…QREGAMVKCA (302 aa)) lie on the Cytoplasmic side of the membrane. A t-SNARE coiled-coil homology domain is found at 227-289 (QHVSAERERE…EEGYKQLQKA (63 aa)). Residues 303 to 323 (TILLVLCLIMIVLLILKNILF) form a helical; Anchor for type IV membrane protein membrane-spanning segment.

This sequence belongs to the syntaxin family. Interacts with VTI12 and SYP61 to form a t-SNARE complex and with VPS45. In terms of tissue distribution, expressed at low levels in roots, stems, flowers and leaves.

The protein resides in the golgi apparatus. Its subcellular location is the trans-Golgi network membrane. Contributes to the regulation of secretory and vacuolar transport pathways in the post-Golgi network, and to the maintenance of the Golgi apparatus and trans-Golgi network (TGN) morphologies. Vesicle trafficking protein that functions in the secretory pathway and mediates liposome fusion. Required for extracellular resistance responses to a fungal pathogen. Also involved in the protection of chloroplasts from salicylic acid-dependent biotic stress. This Arabidopsis thaliana (Mouse-ear cress) protein is Syntaxin-42.